We begin with the raw amino-acid sequence, 31 residues long: Cyclotide vinc-B (31 aa).

The segment at residues 1 to 31 (GSIPACGESCFKGKCYTPGCTCSKYPLCAKN) is a cross-link (cyclopeptide (Gly-Asn)). 3 disulfide bridges follow: Cys6–Cys20, Cys10–Cys22, and Cys15–Cys28.

Belongs to the cyclotide family. In terms of processing, this is a cyclic peptide.

Its function is as follows. Probably participates in a plant defense mechanism. The chain is Cyclotide vinc-B from Viola inconspicua.